We begin with the raw amino-acid sequence, 83 residues long: Hainantoxin-III 12 (83 aa).

The N-terminal stretch at 1 to 21 is a signal peptide; sequence MKASMFLALAGLVLLFVVGYA. The propeptide occupies 22–48; the sequence is SGSEEKEFPRELLSKIFAVDDFKGEER. 3 disulfides stabilise this stretch: Cys50–Cys65, Cys57–Cys70, and Cys64–Cys77. Position 81 is a leucine amide (Leu81).

It belongs to the neurotoxin 10 (Hwtx-1) family. 15 (Hntx-3) subfamily. Monomer. In terms of tissue distribution, expressed by the venom gland.

It localises to the secreted. Its function is as follows. Selective antagonist of neuronal tetrodotoxin (TTX)-sensitive voltage-gated sodium channels (IC(50)=1270 nM on Nav1.1/SCN1A, 270 nM on Nav1.2/SCN2A, 491 nM on Nav1.3/SCN3A and 232 nM on Nav1.7/SCN9A). This toxin suppress Nav1.7 current amplitude without significantly altering the activation, inactivation, and repriming kinetics. Short extreme depolarizations partially activate the toxin-bound channel, indicating voltage-dependent inhibition of this toxin. This toxin increases the deactivation of the Nav1.7 current after extreme depolarizations. The toxin-Nav1.7 complex is gradually dissociated upon prolonged strong depolarizations in a voltage-dependent manner, and the unbound toxin rebinds to Nav1.7 after a long repolarization. Moreover, analysis of chimeric channels showed that the DIIS3-S4 linker is critical for toxin binding to Nav1.7. These data are consistent with this toxin interacting with Nav1.7 site 4 and trapping the domain II voltage sensor in the closed state. The protein is Hainantoxin-III 12 of Cyriopagopus hainanus (Chinese bird spider).